The chain runs to 442 residues: uncharacterized protein (442 aa).

[4Fe-4S] cluster contacts are provided by cysteine 43, cysteine 49, cysteine 52, and cysteine 130. Residues glutamine 273, tyrosine 302, glutamate 323, and aspartate 372 each contribute to the S-adenosyl-L-methionine site. The active-site Nucleophile is the cysteine 399.

The protein belongs to the class I-like SAM-binding methyltransferase superfamily. RNA M5U methyltransferase family.

This is an uncharacterized protein from Protochlamydia amoebophila (strain UWE25).